The chain runs to 404 residues: Cysteine desulfurase IscS (404 aa).

Pyridoxal 5'-phosphate contacts are provided by residues 75 to 76 (AT), asparagine 155, glutamine 183, and 203 to 205 (SAH). Lysine 206 carries the N6-(pyridoxal phosphate)lysine modification. Threonine 243 provides a ligand contact to pyridoxal 5'-phosphate. Cysteine 328 functions as the Cysteine persulfide intermediate in the catalytic mechanism. Cysteine 328 lines the [2Fe-2S] cluster pocket.

This sequence belongs to the class-V pyridoxal-phosphate-dependent aminotransferase family. NifS/IscS subfamily. In terms of assembly, homodimer. Forms a heterotetramer with IscU, interacts with other sulfur acceptors. The cofactor is pyridoxal 5'-phosphate.

It localises to the cytoplasm. It catalyses the reaction (sulfur carrier)-H + L-cysteine = (sulfur carrier)-SH + L-alanine. Its pathway is cofactor biosynthesis; iron-sulfur cluster biosynthesis. Functionally, master enzyme that delivers sulfur to a number of partners involved in Fe-S cluster assembly, tRNA modification or cofactor biosynthesis. Catalyzes the removal of elemental sulfur atoms from cysteine to produce alanine. Functions as a sulfur delivery protein for Fe-S cluster synthesis onto IscU, an Fe-S scaffold assembly protein, as well as other S acceptor proteins. The chain is Cysteine desulfurase IscS from Vibrio vulnificus (strain CMCP6).